Consider the following 452-residue polypeptide: MSRTCLAVILAAGDSTRMKSAMSKVLHPVAGLPMIAHVMQAIAASDIADVALVVGRDADKVTKAASIKGLSVTPFVQTERLGTGHAVLTAREALARGYDDILVAYGDAPLITPGPLLAARAALADGNDIAVIGFHTEKPTGYGRLLVEDGELVAIREEKDASDEERKVTWCNSGLMAINGAKALDLLGRIGNANAKGEYYLTDLVEIIRSLGGKAVAVDAPEAELAGCNNRAELAVIEKLWQERRRHELMLSGVSMIAPETVFLAYDTVLAQDVLIEPNVVFGPGVTVESGAVIHAFSHLEGAHVASGATVGPFARLRPGANLGEGSKVGNFCEVKKAEIGAGAKINHLTYIGDAFIGAETNIGAGTITCNYDGVNKHETRIGANAFIGSNSALVAPVTIGDGAFIASGSVITDDVPADALALGRARQEIKPERAKIIRERNMAIKAFSGKV.

The interval 1–231 (MSRTCLAVIL…EAELAGCNNR (231 aa)) is pyrophosphorylase. UDP-N-acetyl-alpha-D-glucosamine is bound by residues 10-13 (LAAG), lysine 24, glutamine 77, 82-83 (GT), 105-107 (YGD), glycine 143, glutamate 157, asparagine 172, and asparagine 229. Mg(2+) is bound at residue aspartate 107. Asparagine 229 serves as a coordination point for Mg(2+). Positions 232-252 (AELAVIEKLWQERRRHELMLS) are linker. Residues 253 to 452 (GVSMIAPETV…MAIKAFSGKV (200 aa)) form an N-acetyltransferase region. UDP-N-acetyl-alpha-D-glucosamine is bound by residues arginine 318 and lysine 336. Catalysis depends on histidine 348, which acts as the Proton acceptor. Tyrosine 351 and asparagine 362 together coordinate UDP-N-acetyl-alpha-D-glucosamine. Residues alanine 365, 371–372 (NY), serine 390, serine 408, and arginine 425 contribute to the acetyl-CoA site.

This sequence in the N-terminal section; belongs to the N-acetylglucosamine-1-phosphate uridyltransferase family. In the C-terminal section; belongs to the transferase hexapeptide repeat family. In terms of assembly, homotrimer. The cofactor is Mg(2+).

The protein resides in the cytoplasm. It catalyses the reaction alpha-D-glucosamine 1-phosphate + acetyl-CoA = N-acetyl-alpha-D-glucosamine 1-phosphate + CoA + H(+). The catalysed reaction is N-acetyl-alpha-D-glucosamine 1-phosphate + UTP + H(+) = UDP-N-acetyl-alpha-D-glucosamine + diphosphate. Its pathway is nucleotide-sugar biosynthesis; UDP-N-acetyl-alpha-D-glucosamine biosynthesis; N-acetyl-alpha-D-glucosamine 1-phosphate from alpha-D-glucosamine 6-phosphate (route II): step 2/2. The protein operates within nucleotide-sugar biosynthesis; UDP-N-acetyl-alpha-D-glucosamine biosynthesis; UDP-N-acetyl-alpha-D-glucosamine from N-acetyl-alpha-D-glucosamine 1-phosphate: step 1/1. It participates in bacterial outer membrane biogenesis; LPS lipid A biosynthesis. Its function is as follows. Catalyzes the last two sequential reactions in the de novo biosynthetic pathway for UDP-N-acetylglucosamine (UDP-GlcNAc). The C-terminal domain catalyzes the transfer of acetyl group from acetyl coenzyme A to glucosamine-1-phosphate (GlcN-1-P) to produce N-acetylglucosamine-1-phosphate (GlcNAc-1-P), which is converted into UDP-GlcNAc by the transfer of uridine 5-monophosphate (from uridine 5-triphosphate), a reaction catalyzed by the N-terminal domain. The chain is Bifunctional protein GlmU from Allorhizobium ampelinum (strain ATCC BAA-846 / DSM 112012 / S4) (Agrobacterium vitis (strain S4)).